The primary structure comprises 135 residues: MAGAAAFVEADNAEEIMARIETKSQKIESLLKHYKHVEALKTALDGSPPKTLDERCKSANWIVVHRAIMAIKDIEGMLNSLTAEYYDILMKYLYRGLSTGDEPTCEQCLMIHEKLTERAGLGCILRCLSDTTNTV.

Belongs to the ARPC5 family. Component of the Arp2/3 complex composed of ARP2, ARP3, ARPC1/p41-ARC, ARPC2/p34-ARC, ARPC3/p21-ARC, ARPC4/p20-ARC and ARPC5/p16-ARC.

The protein resides in the cytoplasm. It localises to the cytoskeleton. Its subcellular location is the cell projection. Its function is as follows. Functions as a component of the Arp2/3 complex which is involved in regulation of actin polymerization and together with an activating nucleation-promoting factor (NPF) mediates the formation of branched actin networks. Arp2/3 complex plays a critical role in the control of cell morphogenesis via the modulation of cell polarity development. This Arabidopsis thaliana (Mouse-ear cress) protein is Actin-related protein 2/3 complex subunit 5B (ARPC5B).